The following is a 137-amino-acid chain: Putative pre-16S rRNA nuclease (137 aa).

It belongs to the YqgF nuclease family.

The protein localises to the cytoplasm. In terms of biological role, could be a nuclease involved in processing of the 5'-end of pre-16S rRNA. This Anaeromyxobacter sp. (strain Fw109-5) protein is Putative pre-16S rRNA nuclease.